Consider the following 187-residue polypeptide: MSIKSDRWIRRAAEAGMIEPFEPGQVRTAGGNRIVSYGTSSYGYDVRCADEFKIFTNINSTIVDPKQFDEKSFVDFKGDVCIIPPNSFALARTVEYFRIPRSVLTICLGKSTYARCGIIVNVTPLEPEWEGHVTLEFSNTTPLPAKVYAGEGCAQMLFLESDEVCETSYRDRGGKYQGQRGVTLPRT.

Residues 110–115 (KSTYAR), 134–136 (TLE), glutamine 155, tyrosine 169, and glutamine 179 contribute to the dCTP site. Glutamate 136 serves as the catalytic Proton donor/acceptor.

Belongs to the dCTP deaminase family. In terms of assembly, homotrimer.

It carries out the reaction dCTP + H2O + H(+) = dUTP + NH4(+). It participates in pyrimidine metabolism; dUMP biosynthesis; dUMP from dCTP (dUTP route): step 1/2. In terms of biological role, catalyzes the deamination of dCTP to dUTP. The sequence is that of dCTP deaminase from Bordetella pertussis (strain Tohama I / ATCC BAA-589 / NCTC 13251).